A 200-amino-acid chain; its full sequence is Ciliary neurotrophic factor (200 aa).

It belongs to the CNTF family. In terms of assembly, homodimer. In terms of tissue distribution, nervous system.

It localises to the cytoplasm. Functionally, CNTF is a survival factor for various neuronal cell types. Seems to prevent the degeneration of motor axons after axotomy. This Homo sapiens (Human) protein is Ciliary neurotrophic factor (CNTF).